Here is a 277-residue protein sequence, read N- to C-terminus: Phosphate import ATP-binding protein PstB (277 aa).

In terms of domain architecture, ABC transporter spans 31–272 (IEVPGLSLFY…PAKKQTEDYI (242 aa)). ATP is bound at residue 63–70 (GPSGCGKS).

Belongs to the ABC transporter superfamily. Phosphate importer (TC 3.A.1.7) family. As to quaternary structure, the complex is composed of two ATP-binding proteins (PstB), two transmembrane proteins (PstC and PstA) and a solute-binding protein (PstS).

The protein localises to the cell inner membrane. The enzyme catalyses phosphate(out) + ATP + H2O = ADP + 2 phosphate(in) + H(+). In terms of biological role, part of the ABC transporter complex PstSACB involved in phosphate import. Responsible for energy coupling to the transport system. The protein is Phosphate import ATP-binding protein PstB of Pseudomonas putida (Arthrobacter siderocapsulatus).